Here is a 463-residue protein sequence, read N- to C-terminus: A-type ATP synthase subunit B (463 aa).

The protein belongs to the ATPase alpha/beta chains family. As to quaternary structure, has multiple subunits with at least A(3), B(3), C, D, E, F, H, I and proteolipid K(x).

The protein localises to the cell membrane. In terms of biological role, component of the A-type ATP synthase that produces ATP from ADP in the presence of a proton gradient across the membrane. The B chain is a regulatory subunit. This Saccharolobus islandicus (strain Y.N.15.51 / Yellowstone #2) (Sulfolobus islandicus) protein is A-type ATP synthase subunit B.